The chain runs to 155 residues: Small ribosomal subunit protein uS7 (155 aa).

The protein belongs to the universal ribosomal protein uS7 family. Part of the 30S ribosomal subunit. Contacts proteins S9 and S11.

Functionally, one of the primary rRNA binding proteins, it binds directly to 16S rRNA where it nucleates assembly of the head domain of the 30S subunit. Is located at the subunit interface close to the decoding center, probably blocks exit of the E-site tRNA. This chain is Small ribosomal subunit protein uS7, found in Xanthomonas axonopodis pv. citri (strain 306).